Consider the following 189-residue polypeptide: UPF0340 protein SAG0103 (189 aa).

Belongs to the UPF0340 family.

This Streptococcus agalactiae serotype V (strain ATCC BAA-611 / 2603 V/R) protein is UPF0340 protein SAG0103.